We begin with the raw amino-acid sequence, 238 residues long: uncharacterized protein (238 aa).

7 consecutive transmembrane segments (helical) span residues 15–37 (FGALHFAIASVAVLLSALFVLLP), 50–69 (ARAGVAILFLRLGLMLCGTL), 79–96 (LPFHLCPAALISGSLYFI), 101–118 (IFFNLLYFWHFGSFVAVL), 128–150 (ILYAYLFMLTHCLEPAMVVFSLL), 163–183 (CAVLGFLLLAANALFWNRRLG), and 203–225 (FFVYQLLFVSALCLLMLVLYLPF).

Its subcellular location is the cell membrane. This is an uncharacterized protein from Treponema pallidum (strain Nichols).